A 62-amino-acid polypeptide reads, in one-letter code: Small polypeptide DEVIL 17 (62 aa).

Residues 27-58 (RRNKGCLAMVKERRSRFYIARRCILMLLCWHK) are required for DVL/RTFL small polypeptide activity. Residues 39-56 (RRSRFYIARRCILMLLCW) form a helical membrane-spanning segment.

Belongs to the DVL/RTFL small polypeptides family.

The protein localises to the cell membrane. Functionally, small polypeptide acting as a regulatory molecule which coordinates cellular responses required for differentiation, growth and development, probably by restricting polar cell proliferation in lateral organs and coordinating socket cell recruitment and differentiation at trichome sites. The protein is Small polypeptide DEVIL 17 of Arabidopsis thaliana (Mouse-ear cress).